A 379-amino-acid chain; its full sequence is Stimulator of interferon genes protein (379 aa).

3 consecutive transmembrane segments (helical) span residues 20 to 40, 87 to 107, and 115 to 135; these read VAAF…GEPS, ACLG…YFYV, and LPLT…ILLG. S-palmitoyl cysteine attachment occurs at residues Cys88 and Cys91. Residues 153 to 340 are cyclic dinucleotide-binding domain (CBD); the sequence is FNVAHGLAWS…KHLRQEEREE (188 aa). Residues Ser162, Tyr167, Arg238, and Thr263 each coordinate 2',3'-cGAMP. Residues Ser162, Tyr167, 238–241, and Thr263 each bind 3',3'-c-di-GMP; that span reads RVYT. The 2',3'-cUAMP site is built by Tyr167, Arg238, and Thr263. Residues 340 to 379 form a C-terminal tail (CTT) region; it reads EVTMGTAGTFVAPGSSTLHQEPELLISGMDQPLPLRTDIF. The residue at position 355 (Ser355) is a Phosphoserine. Thr356 bears the Phosphothreonine mark. A pLxIS motif motif is present at residues 363–366; that stretch reads LLIS. Ser366 is subject to Phosphoserine; by TBK1.

This sequence belongs to the STING family. In terms of assembly, homodimer; forms a homodimer in absence of cyclic nucleotide (c-di-GMP or cGAMP). Homotetramer; in presence of cyclic nucleotide (c-di-GMP or cGAMP), forms tetramers and higher-order oligomers through side-by-side packing. Interacts (when phosphorylated) with IRF3; following activation and phosphorylation on the pLxIS motif by TBK1, recruits IRF3. Interacts with TBK1; when homodimer, leading to subsequent production of IFN-beta. Interacts (via transmembrane domain) with TMEM203. In terms of processing, phosphorylation by TBK1 leads to activation and production of IFN-beta. Following cyclic nucleotide (c-di-GMP or cGAMP)-binding, activation and translocation from the endoplasmic reticulum, STING1 is phosphorylated by TBK1 at Ser-366 in the pLxIS motif. The phosphorylated pLxIS motif constitutes an IRF3-binding motif, leading to recruitment of the transcription factor IRF3 to induce type-I interferons and other cytokines. In contrast, lacks phosphorylation site at position 358, leading to reduced production of type-I interferons and other cytokines.

It localises to the endoplasmic reticulum membrane. The protein localises to the cytoplasm. The protein resides in the perinuclear region. Its subcellular location is the endoplasmic reticulum-Golgi intermediate compartment membrane. It is found in the golgi apparatus membrane. It localises to the cytoplasmic vesicle. The protein localises to the autophagosome membrane. The protein resides in the mitochondrion outer membrane. Its subcellular location is the cell membrane. The catalysed reaction is H(+)(in) = H(+)(out). Facilitator of innate immune signaling that acts as a sensor of cytosolic DNA from bacteria and viruses and promotes low production of type I interferon (IFN-alpha and IFN-beta). Compared to other mammals, STING1-dependent type I interferon induction is strongly reduced in bats, suggesting that the cGAS-STING pathway promotes a limited inflammatory response. Innate immune response is triggered in response to non-CpG double-stranded DNA from viruses and bacteria delivered to the cytoplasm. Acts by binding cyclic dinucleotides: recognizes and binds cyclic di-GMP (c-di-GMP), a second messenger produced by bacteria, cyclic UMP-AMP (2',3'-cUAMP), and cyclic GMP-AMP (cGAMP), a messenger produced by CGAS in response to DNA virus in the cytosol. Upon binding to c-di-GMP, cUAMP or cGAMP, STING1 oligomerizes, translocates from the endoplasmic reticulum and is phosphorylated by TBK1 on the pLxIS motif, leading to recruitment and subsequent activation of the transcription factor IRF3 to induce expression of type I interferon and exert a potent anti-viral state. In addition to promote the production of type I interferons, plays a direct role in autophagy. Following cGAMP-binding, STING1 buds from the endoplasmic reticulum into COPII vesicles, which then form the endoplasmic reticulum-Golgi intermediate compartment (ERGIC). The ERGIC serves as the membrane source for WIPI2 recruitment and LC3 lipidation, leading to formation of autophagosomes that target cytosolic DNA or DNA viruses for degradation by the lysosome. Promotes autophagy by acting as a proton channel that directs proton efflux from the Golgi to facilitate MAP1LC3B/LC3B lipidation. The autophagy- and interferon-inducing activities can be uncoupled and autophagy induction is independent of TBK1 phosphorylation. The chain is Stimulator of interferon genes protein from Eidolon helvum (Straw-colored fruit bat).